We begin with the raw amino-acid sequence, 465 residues long: Protein hedgehog (465 aa).

Residue C79 is the site of N-palmitoyl cysteine attachment. Ca(2+) is bound by residues E143, E144, D149, T179, E180, D183, and D185. G251 carries Cholesterol glycine ester lipidation.

Belongs to the hedgehog family. Interacts with shf. The C-terminal part of the hedgehog protein precursor displays an autoproteolysis activity that results in the cleavage of the full-length protein into two parts (N-product and C-product). In addition, the C-terminal part displays a cholesterol transferase activity that results by the covalent attachment of a cholesterol moiety to the C-terminal of the newly generated N-product. The N-product is the active species in both local and long-range signaling, whereas the C-product has no signaling activity. In terms of processing, cholesterylation is required for N-product targeting to lipid rafts and multimerization. Post-translationally, N-palmitoylation by Rasp of the hedgehog N-product, within the secretory pathway, is required for the embryonic and larval patterning activities of the hedgehog signal.

The protein resides in the nucleus. It localises to the cytoplasm. The protein localises to the cell membrane. The catalysed reaction is glycyl-L-cysteinyl-[protein] + cholesterol + H(+) = [protein]-C-terminal glycyl cholesterol ester + N-terminal L-cysteinyl-[protein]. In terms of biological role, the C-terminal part of the hedgehog protein precursor displays an autoproteolysis activity that results in the cleavage of the full-length protein into two parts (N-product and C-product). In addition, the C-terminal part displays a cholesterol transferase activity that results by the covalent attachment of a cholesterol moiety to the C-terminal of the newly generated N-product. Once cleaved, the C-product has no signaling activity and diffuses from the cell. Its function is as follows. The dually lipidated hedgehog protein N-product is a morphogen which is essential for a variety of patterning events during development. Establishes the anterior-posterior axis of the embryonic segments and patterns the larval imaginal disks. Binds to the patched (ptc) receptor, which functions in association with smoothened (smo), to activate the transcription of target genes wingless (wg), decapentaplegic (dpp) and ptc. In the absence of hh, ptc represses the constitutive signaling activity of smo through fused (fu). Essential component of a signaling pathway which regulates the Duox-dependent gut immune response to bacterial uracil; required to activate Cad99C-dependent endosome formation, norpA-dependent Ca2+ mobilization and p38 MAPK, which are essential steps in the Duox-dependent production of reactive oxygen species (ROS) in response to intestinal bacterial infection. During photoreceptor differentiation, it up-regulates transcription of Ubr3, which in turn promotes the hh-signaling pathway by mediating the ubiquitination and degradation of cos. This Drosophila yakuba (Fruit fly) protein is Protein hedgehog.